Here is a 1502-residue protein sequence, read N- to C-terminus: tRNA (32-2'-O)-methyltransferase regulator trm732 (1502 aa).

Belongs to the THADA family.

It localises to the cytoplasm. Its subcellular location is the nucleus. Together with methyltransferase trm7, methylates the 2'-O-ribose of nucleotides at position 32 of the anticodon loop of substrate tRNAs. In Schizosaccharomyces pombe (strain 972 / ATCC 24843) (Fission yeast), this protein is tRNA (32-2'-O)-methyltransferase regulator trm732.